Reading from the N-terminus, the 403-residue chain is CCA-adding enzyme (403 aa).

Positions 32 and 35 each coordinate ATP. Positions 32 and 35 each coordinate CTP. Mg(2+)-binding residues include Asp45 and Asp47. Residues Arg116, Asp159, Arg162, Arg165, and Arg168 each contribute to the ATP site. CTP contacts are provided by Arg116, Asp159, Arg162, Arg165, and Arg168.

This sequence belongs to the tRNA nucleotidyltransferase/poly(A) polymerase family. Bacterial CCA-adding enzyme type 3 subfamily. Homodimer. It depends on Mg(2+) as a cofactor.

The catalysed reaction is a tRNA precursor + 2 CTP + ATP = a tRNA with a 3' CCA end + 3 diphosphate. The enzyme catalyses a tRNA with a 3' CCA end + 2 CTP + ATP = a tRNA with a 3' CCACCA end + 3 diphosphate. In terms of biological role, catalyzes the addition and repair of the essential 3'-terminal CCA sequence in tRNAs without using a nucleic acid template. Adds these three nucleotides in the order of C, C, and A to the tRNA nucleotide-73, using CTP and ATP as substrates and producing inorganic pyrophosphate. tRNA 3'-terminal CCA addition is required both for tRNA processing and repair. Also involved in tRNA surveillance by mediating tandem CCA addition to generate a CCACCA at the 3' terminus of unstable tRNAs. While stable tRNAs receive only 3'-terminal CCA, unstable tRNAs are marked with CCACCA and rapidly degraded. This chain is CCA-adding enzyme, found in Streptococcus uberis (strain ATCC BAA-854 / 0140J).